A 119-amino-acid polypeptide reads, in one-letter code: Large ribosomal subunit protein uL18 (119 aa).

Belongs to the universal ribosomal protein uL18 family. As to quaternary structure, part of the 50S ribosomal subunit; part of the 5S rRNA/L5/L18/L25 subcomplex. Contacts the 5S and 23S rRNAs.

Its function is as follows. This is one of the proteins that bind and probably mediate the attachment of the 5S RNA into the large ribosomal subunit, where it forms part of the central protuberance. The chain is Large ribosomal subunit protein uL18 from Lactobacillus johnsonii (strain CNCM I-12250 / La1 / NCC 533).